Consider the following 358-residue polypeptide: Protein IncC (358 aa).

A disordered region spans residues 1 to 101 (MGAIHEETAN…VGSRRQEETG (101 aa)). Basic and acidic residues predominate over residues 88 to 99 (HRQEVGSRRQEE).

This sequence belongs to the ParA family.

Its function is as follows. This is one of the proteins encoded by the trfB operon; it is involved in plasmid maintenance and replication. The polypeptide is Protein IncC (incC) (Escherichia coli).